The following is a 970-amino-acid chain: MAQLERSAISGFSSKSRRNSFAYDVKREVYNEETFQQEHKRKASSSGNMNINITTFRHHVQCRCSWHRFLRCVLTIFPFLEWMCMYRLKDWLLGDLLAGISVGLVQVPQGLTLSLLARQLIPPLNIAYAAFCSSVIYVIFGSCHQMSIGSFFLVSALLINVLKVSPFNNGQLVMGSFVKNEFSAPSYLMGYNKSLSVVATTTFLTGIIQLIMGVLGLGFIATYLPESAMSAYLAAVALHIMLSQLTFIFGIMISFHAGPISFFYDIINYCVALPKANSTSILVFLTVVVALRINKCIRISFNQYPIEFPMELFLIIGFTVIANKISMATETSQTLIDMIPYSFLLPVTPDFSLLPKIILQAFSLSLVSSFLLIFLGKKIASLHNYSVNSNQDLIAIGLCNVVSSFFRSCVFTGAIARTIIQDKSGGRQQFASLVGAGVMLLLMVKMGHFFYTLPNAVLAGIILSNVIPYLETISNLPSLWRQDQYDCALWMMTFSSSIFLGLDIGLIISVVSAFFITTVRSHRAKILLLGQIPNTNIYRSINDYREIITIPGVKIFQCCSSITFVNVYYLKHKLLKEVDMVKVPLKEEEIFSLFNSSDTNLQGGKICRCFCNCDDLEPLPRILYTERFENKLDPEASSINLIHCSHFESMNTSQTASEDQVPYTVSSVSQKNQGQQYEEVEEVWLPNNSSRNSSPGLPDVAESQGRRSLIPYSDASLLPSVHTIILDFSMVHYVDSRGLVVLRQICNAFQNANILILIAGCHSSIVRAFERNDFFDAGITKTQLFLSVHDAVLFALSRKVIGSSELSIDESETVIRETYSETDKNDNSRYKMSSSFLGSQKNVSPGFIKIQQPVEEESELDLELESEQEAGLGLDLDLDRELEPEMEPKAETETKTQTEMEPQPETEPEMEPNPKSRPRAHTFPQQRYWPMYHPSMASTQSQTQTRTWSVERRRHPMDSYSPEGNSNEDV.

The Cytoplasmic segment spans residues 1-95 (MAQLERSAIS…YRLKDWLLGD (95 aa)). A helical transmembrane segment spans residues 96-116 (LLAGISVGLVQVPQGLTLSLL). Topologically, residues 117 to 119 (ARQ) are extracellular. A helical membrane pass occupies residues 120 to 140 (LIPPLNIAYAAFCSSVIYVIF). At 141-146 (GSCHQM) the chain is on the cytoplasmic side. Residues 147–167 (SIGSFFLVSALLINVLKVSPF) traverse the membrane as a helical segment. Over 168–202 (NNGQLVMGSFVKNEFSAPSYLMGYNKSLSVVATTT) the chain is Extracellular. N-linked (GlcNAc...) asparagine glycosylation is present at asparagine 192. A helical transmembrane segment spans residues 203-223 (FLTGIIQLIMGVLGLGFIATY). Over 224-232 (LPESAMSAY) the chain is Cytoplasmic. The helical transmembrane segment at 233–253 (LAAVALHIMLSQLTFIFGIMI) threads the bilayer. At 254–270 (SFHAGPISFFYDIINYC) the chain is on the extracellular side. The helical transmembrane segment at 271 to 291 (VALPKANSTSILVFLTVVVAL) threads the bilayer. Residues 292–307 (RINKCIRISFNQYPIE) lie on the Cytoplasmic side of the membrane. A helical membrane pass occupies residues 308–328 (FPMELFLIIGFTVIANKISMA). Residues 329–355 (TETSQTLIDMIPYSFLLPVTPDFSLLP) lie on the Extracellular side of the membrane. The helical transmembrane segment at 356-376 (KIILQAFSLSLVSSFLLIFLG) threads the bilayer. Residues 377-392 (KKIASLHNYSVNSNQD) are Cytoplasmic-facing. Residues 393–413 (LIAIGLCNVVSSFFRSCVFTG) traverse the membrane as a helical segment. The Extracellular portion of the chain corresponds to 414-429 (AIARTIIQDKSGGRQQ). The helical transmembrane segment at 430–450 (FASLVGAGVMLLLMVKMGHFF) threads the bilayer. Residues 451-452 (YT) lie on the Cytoplasmic side of the membrane. A helical membrane pass occupies residues 453–473 (LPNAVLAGIILSNVIPYLETI). Topologically, residues 474–497 (SNLPSLWRQDQYDCALWMMTFSSS) are extracellular. A helical transmembrane segment spans residues 498–518 (IFLGLDIGLIISVVSAFFITT). Residues 519–970 (VRSHRAKILL…SPEGNSNEDV (452 aa)) are Cytoplasmic-facing. The region spanning 543–795 (DYREIITIPG…LSVHDAVLFA (253 aa)) is the STAS domain. Residues 664–970 (TVSSVSQKNQ…SPEGNSNEDV (307 aa)) are interaction with RACGAP1. Residues 858–868 (SELDLELESEQ) show a composition bias toward acidic residues. A disordered region spans residues 858–970 (SELDLELESE…SPEGNSNEDV (113 aa)). Residues 877 to 898 (DLDRELEPEMEPKAETETKTQT) show a composition bias toward basic and acidic residues. Over residues 938–948 (STQSQTQTRTW) the composition is skewed to low complexity.

This sequence belongs to the SLC26A/SulP transporter (TC 2.A.53) family. In terms of assembly, interacts with RACGAP1. Interacts with CFTR; stimulates anion transport activity of CFTR. N-glycosylated. In terms of tissue distribution, expression observed exclusively in testis, restricted to the meiotic phase of the germ cell. Abundant expression located in the seminiferous tubules, concentrated on the luminal side of the tubuli harboring the spermatocytes and spermatids.

Its subcellular location is the membrane. It carries out the reaction sulfate(out) + chloride(in) = sulfate(in) + chloride(out). The catalysed reaction is oxalate(in) + chloride(out) = oxalate(out) + chloride(in). Activity is inhibited by 4,4'-Di-isothiocyanatostilbene-2,2'-disulfonic acid (DIDS - an inhibitor of several anion channels and transporters) and gluconate. Functionally, antiporter that mediates the exchange of sulfate and oxalate against chloride ions across a membrane. Stimulates anion transport activity of CFTR. May cooperate with CFTR in the regulation of chloride and bicarbonate ions fluxes required for activation of the ADCY10/PKA pathway during sperm motility and sperm capacitation. May play a role in sperm tail differentiation and motility and hence male fertility. In Homo sapiens (Human), this protein is Testis anion transporter 1.